A 333-amino-acid chain; its full sequence is GTP 3',8-cyclase (333 aa).

In terms of domain architecture, Radical SAM core spans 7–221; sequence KFGRVHDYIR…FEACDAIGFE (215 aa). A GTP-binding site is contributed by R16. [4Fe-4S] cluster-binding residues include C23 and C27. Y29 is a binding site for S-adenosyl-L-methionine. Residue C30 participates in [4Fe-4S] cluster binding. R66 is a binding site for GTP. G70 provides a ligand contact to S-adenosyl-L-methionine. T97 lines the GTP pocket. S121 contacts S-adenosyl-L-methionine. GTP is bound at residue K158. M192 lines the S-adenosyl-L-methionine pocket. 2 residues coordinate [4Fe-4S] cluster: C257 and C260. 262–264 contacts GTP; that stretch reads RLR. C274 lines the [4Fe-4S] cluster pocket.

This sequence belongs to the radical SAM superfamily. MoaA family. Monomer and homodimer. [4Fe-4S] cluster serves as cofactor.

The catalysed reaction is GTP + AH2 + S-adenosyl-L-methionine = (8S)-3',8-cyclo-7,8-dihydroguanosine 5'-triphosphate + 5'-deoxyadenosine + L-methionine + A + H(+). The protein operates within cofactor biosynthesis; molybdopterin biosynthesis. In terms of biological role, catalyzes the cyclization of GTP to (8S)-3',8-cyclo-7,8-dihydroguanosine 5'-triphosphate. This Listeria welshimeri serovar 6b (strain ATCC 35897 / DSM 20650 / CCUG 15529 / CIP 8149 / NCTC 11857 / SLCC 5334 / V8) protein is GTP 3',8-cyclase.